A 170-amino-acid chain; its full sequence is Ribosome-binding factor A (170 aa).

Residues 123 to 170 (AKAGVYAGDEDPYVKPRVIGEDEDDDDEEGDEDGDDVDRSAPGYEPAH) are disordered. Acidic residues predominate over residues 143 to 158 (EDEDDDDEEGDEDGDD).

It belongs to the RbfA family. As to quaternary structure, monomer. Binds 30S ribosomal subunits, but not 50S ribosomal subunits or 70S ribosomes.

The protein resides in the cytoplasm. Its function is as follows. One of several proteins that assist in the late maturation steps of the functional core of the 30S ribosomal subunit. Associates with free 30S ribosomal subunits (but not with 30S subunits that are part of 70S ribosomes or polysomes). Required for efficient processing of 16S rRNA. May interact with the 5'-terminal helix region of 16S rRNA. The chain is Ribosome-binding factor A from Clavibacter sepedonicus (Clavibacter michiganensis subsp. sepedonicus).